A 2273-amino-acid polypeptide reads, in one-letter code: Nonribosomal peptide synthetase hasD (2273 aa).

The segment at F100–F446 is adenylation 1. The Carrier 1 domain maps to E588 to S664. At S625 the chain carries O-(pantetheine 4'-phosphoryl)serine. The tract at residues I696–N1120 is condensation 1. The adenylation 2 stretch occupies residues E1156–L1487. The region spanning D1634–V1714 is the Carrier 2 domain. Residue S1673 is modified to O-(pantetheine 4'-phosphoryl)serine. The condensation 2 stretch occupies residues G1735 to D2127. The disordered stretch occupies residues P2174–Q2200. Residues E2186–Q2200 show a composition bias toward polar residues. The Carrier 3 domain maps to Q2201–I2273. S2235 bears the O-(pantetheine 4'-phosphoryl)serine mark.

The protein belongs to the NRP synthetase family. Pantetheine 4'-phosphate is required as a cofactor.

It participates in secondary metabolite biosynthesis. Its function is as follows. Nonribosomal peptide synthetase; part of the gene cluster that mediates the biosynthesis of hexadehydro-astechrome (HAS), a tryptophan-derived iron(III)-complex that acts as a virulence factor in infected mice. Within the pathway, the NRPS condenses tryptophan and alanine to produce the Trp-Ala dipeptide. The 7-dimethylallyltryptophan synthase hasE then catalyzes the prenylation of the hasD-tethered tryptophan or the resulting tethered Trp-Ala dipeptide at the C-7 position of the indole moiety. HAS biosynthesis continues via tethered intermediates with the succesive actions of the cytochrome P450 monooxygenase hasH, the O-methyltransferase hasC, and the FAD-linked oxidoreductase hasG. The resulting O-methylated diketopiperazine is then released from hasD. Finally, three O-methylated diketopiperazine molecules assemble in a trimeric complex with Fe(III) to produce hexadehydro-astechrome. The chain is Nonribosomal peptide synthetase hasD from Aspergillus fumigatus (strain CBS 144.89 / FGSC A1163 / CEA10) (Neosartorya fumigata).